An 833-amino-acid chain; its full sequence is Piwi-like protein 2 (833 aa).

Positions Arg-227 to Gly-353 constitute a PAZ domain. The segment at Pro-313–Lys-338 is disordered. The span at Lys-320 to Lys-338 shows a compositional bias: basic and acidic residues. Residues Lys-515–Lys-815 enclose the Piwi domain.

It belongs to the argonaute family. Piwi subfamily. As to expression, expressed in dividing adult stem cells.

Required for the production of functional progeny from adult somatic stem cells (neoblasts). The sequence is that of Piwi-like protein 2 (wi-2) from Schmidtea mediterranea (Freshwater planarian flatworm).